Consider the following 308-residue polypeptide: Glycosyltransferase 6 domain-containing protein 1 (308 aa).

Residues 1–6 (MNSKRM) lie on the Cytoplasmic side of the membrane. The helical; Signal-anchor for type II membrane protein transmembrane segment at 7–23 (LLLVLFAFSLMLVERYF) threads the bilayer. Topologically, residues 24–308 (RNHQVEELRL…KVAHDSHRKL (285 aa)) are lumenal. A glycan (N-linked (GlcNAc...) asparagine) is linked at N74. Substrate contacts are provided by residues 82-87 (FATGRF), 173-175 (AVN), and 195-198 (HAWW). Residue E263 is the Nucleophile of the active site.

Belongs to the glycosyltransferase 6 family. Requires Mn(2+) as cofactor.

Its subcellular location is the membrane. This Macaca fascicularis (Crab-eating macaque) protein is Glycosyltransferase 6 domain-containing protein 1 (GLT6D1).